Reading from the N-terminus, the 107-residue chain is uncharacterized protein (107 aa).

This is an uncharacterized protein from Saccharomyces cerevisiae (strain ATCC 204508 / S288c) (Baker's yeast).